The chain runs to 143 residues: Fluoride-specific ion channel FluC 1 (143 aa).

The next 4 helical transmembrane spans lie at 13 to 33 (VLVG…SVIA), 42 to 62 (GVPW…ATLL), 80 to 100 (LCIG…TVEA), and 111 to 131 (WGIA…WVVI). Na(+) is bound by residues glycine 88 and threonine 91.

The protein belongs to the fluoride channel Fluc/FEX (TC 1.A.43) family.

The protein resides in the cell membrane. The enzyme catalyses fluoride(in) = fluoride(out). Its activity is regulated as follows. Na(+) is not transported, but it plays an essential structural role and its presence is essential for fluoride channel function. Fluoride-specific ion channel. Important for reducing fluoride concentration in the cell, thus reducing its toxicity. This is Fluoride-specific ion channel FluC 1 from Cutibacterium acnes (strain DSM 16379 / KPA171202) (Propionibacterium acnes).